The chain runs to 73 residues: Sec-independent protein translocase protein TatA (73 aa).

A helical membrane pass occupies residues 1–21; it reads MGSFSIWHWLIVLVIVMLVFG. Residues 50–73 form a disordered region; the sequence is KEQIQQSSATAEKTVDVQAKDVNK. Over residues 62–73 the composition is skewed to basic and acidic residues; the sequence is KTVDVQAKDVNK.

Belongs to the TatA/E family. As to quaternary structure, the Tat system comprises two distinct complexes: a TatABC complex, containing multiple copies of TatA, TatB and TatC subunits, and a separate TatA complex, containing only TatA subunits. Substrates initially bind to the TatABC complex, which probably triggers association of the separate TatA complex to form the active translocon.

The protein resides in the cell inner membrane. Part of the twin-arginine translocation (Tat) system that transports large folded proteins containing a characteristic twin-arginine motif in their signal peptide across membranes. TatA could form the protein-conducting channel of the Tat system. The sequence is that of Sec-independent protein translocase protein TatA from Polynucleobacter necessarius subsp. necessarius (strain STIR1).